The primary structure comprises 467 residues: Putative sulfoquinovose importer (467 aa).

A run of 12 helical transmembrane segments spans residues 17–37, 54–74, 88–108, 121–141, 160–180, 185–205, 238–258, 275–295, 303–323, 325–345, 379–399, and 414–434; these read IAYG…TLYL, IIFL…GFLL, PFIL…FIAT, ALFM…GAMI, GGAT…QSLF, VGYA…MMLC, LLVL…KLAI, WMGF…PLTV, VYLA…FWGS, SFTF…VNSL, ISAA…GYVP, and LIFI…GFFY.

The protein belongs to the sodium:galactoside symporter (TC 2.A.2) family.

The protein resides in the cell inner membrane. In terms of biological role, could be involved in sulfoquinovose import. This Escherichia coli (strain K12) protein is Putative sulfoquinovose importer (yihO).